Consider the following 244-residue polypeptide: Protein YIPF4 (244 aa).

Over 1-113 the chain is Cytoplasmic; the sequence is MQPPGPPPAY…FNRQVVRDNP (113 aa). Residues 114-134 traverse the membrane as a helical segment; the sequence is DFWGPLAVVLFFSMISLYGQF. Residues 135 to 138 lie on the Extracellular side of the membrane; sequence RVVS. The chain crosses the membrane as a helical span at residues 139–159; the sequence is WIITIWIFGSLTIFLLARVLG. The Cytoplasmic portion of the chain corresponds to 160–166; sequence GEVAYGQ. The chain crosses the membrane as a helical span at residues 167–187; it reads VLGVIGYSLLPLIVIAPVLLV. Residues 188–195 lie on the Extracellular side of the membrane; sequence VGSFEVVS. The chain crosses the membrane as a helical span at residues 196 to 216; that stretch reads TLIKLFGVFWAAYSAASLLVG. Residues 217–223 lie on the Cytoplasmic side of the membrane; the sequence is EEFKTKK. Residues 224–244 form a helical membrane-spanning segment; it reads PLLIYPIFLLYIYFLSLYTGV.

Belongs to the YIP1 family. As to quaternary structure, interacts with YIPF3 and YIPF5. In terms of assembly, (Microbial infection) Interacts with human papillomavirus (HPV) E5 proteins. In terms of tissue distribution, expressed in keratinocytes (at protein level).

The protein localises to the golgi apparatus. It is found in the cis-Golgi network membrane. In terms of biological role, involved in the maintenance of the Golgi structure. The sequence is that of Protein YIPF4 (YIPF4) from Homo sapiens (Human).